Here is a 345-residue protein sequence, read N- to C-terminus: Phosphoribosylformylglycinamidine cyclo-ligase (345 aa).

The protein belongs to the AIR synthase family.

The protein resides in the cytoplasm. It catalyses the reaction 2-formamido-N(1)-(5-O-phospho-beta-D-ribosyl)acetamidine + ATP = 5-amino-1-(5-phospho-beta-D-ribosyl)imidazole + ADP + phosphate + H(+). The protein operates within purine metabolism; IMP biosynthesis via de novo pathway; 5-amino-1-(5-phospho-D-ribosyl)imidazole from N(2)-formyl-N(1)-(5-phospho-D-ribosyl)glycinamide: step 2/2. The sequence is that of Phosphoribosylformylglycinamidine cyclo-ligase from Anaeromyxobacter dehalogenans (strain 2CP-1 / ATCC BAA-258).